Reading from the N-terminus, the 1544-residue chain is Lysine-specific demethylase 5B (1544 aa).

Positions 32-73 (CPVFEPSWEEFADPFAFIHKIRPIAEQTGICKVRPPPDWQPP) constitute a JmjN domain. In terms of domain architecture, ARID spans 97–187 (TRVKLNFLDQ…ILNPYNLFLS (91 aa)). Glycyl lysine isopeptide (Lys-Gly) (interchain with G-Cter in SUMO2) cross-links involve residues Lys148, Lys204, Lys209, Lys242, Lys274, and Lys278. Residues 201–230 (TDTKDKEYKPHDIPQRQSVQPSETCPPARR) are disordered. Positions 202–214 (DTKDKEYKPHDIP) are enriched in basic and acidic residues. The PHD-type 1 zinc-finger motif lies at 309 to 359 (LYVCLLCGSGNDEDRLLLCDGCDDSYHTFCLIPPLHDVPKGDWRCPKCLAQ). Tyr425 is a 2-oxoglutarate binding site. The 167-residue stretch at 453–619 (EYLDSGWNLN…LGRQCVEHYR (167 aa)) folds into the JmjC domain. His499 and Glu501 together coordinate Fe cation. Ser507, Asn509, and Lys517 together coordinate 2-oxoglutarate. Residue His587 coordinates Fe cation. Residues 692 to 744 (CVKCKTTCFMSAISCSCKPGLLVCLHHVKELCSCPPYKYKLRYRYTLDDLYPM) form a C5HC2 zinc finger. Lys769 participates in a covalent cross-link: Glycyl lysine isopeptide (Lys-Gly) (interchain with G-Cter in SUMO2). Position 832 is an N6-acetyllysine (Lys832). Ser986 carries the post-translational modification Phosphoserine. The segment at 1176 to 1224 (IKICLCQKAPAAPMIQCELCRDAFHTSCVAVPSISQGLRIWLCPHCRRS) adopts a PHD-type 2 zinc-finger fold. The residue at position 1328 (Ser1328) is a Phosphoserine. The tract at residues 1374-1400 (PSPAQQTDRSSPVRPSSEKNDCCRGKR) is disordered. Positions 1376-1387 (PAQQTDRSSPVR) are enriched in polar residues. Residues 1389-1400 (SSEKNDCCRGKR) show a composition bias toward basic and acidic residues. A Glycyl lysine isopeptide (Lys-Gly) (interchain with G-Cter in SUMO2) cross-link involves residue Lys1450. The residue at position 1456 (Ser1456) is a Phosphoserine. The segment at 1484–1538 (DAICPAVSCLQPEGDEVDWVQCDGSCNQWFHQVCVGVSPEMAEKEDYICVRCTVK) adopts a PHD-type 3 zinc-finger fold.

The protein belongs to the JARID1 histone demethylase family. Interacts with FOXG1B, PAX9, MYC, MYCN and RB1. Interacts with HDAC1, HDAC4, HDAC5 and HDAC7. Interacts (via PHD-type 1 zinc finger) with histone H3 unmodified at 'Lys-4'; the interaction is inhibited when histone H3 is methylated at 'Arg-2' or 'Lys-4'. Fe(2+) is required as a cofactor. As to expression, ubiquitously expressed, with highest levels in testis. Down-regulated in melanoma and glioblastoma. Up-regulated in breast cancer (at protein level).

It localises to the nucleus. The catalysed reaction is N(6),N(6),N(6)-trimethyl-L-lysyl(4)-[histone H3] + 3 2-oxoglutarate + 3 O2 = L-lysyl(4)-[histone H3] + 3 formaldehyde + 3 succinate + 3 CO2. With respect to regulation, several specific inhibitors are being developed and tested. The inhibitor KDOAM-25 inhibits its demethylase activity, resulting to cell cycle arrest in myeloma cells. Its function is as follows. Histone demethylase that demethylates 'Lys-4' of histone H3, thereby playing a central role in histone code. Does not demethylate histone H3 'Lys-9' or H3 'Lys-27'. Demethylates trimethylated, dimethylated and monomethylated H3 'Lys-4'. Acts as a transcriptional corepressor for FOXG1B and PAX9. Favors the proliferation of breast cancer cells by repressing tumor suppressor genes such as BRCA1 and HOXA5. In contrast, may act as a tumor suppressor for melanoma. Represses the CLOCK-BMAL1 heterodimer-mediated transcriptional activation of the core clock component PER2. The chain is Lysine-specific demethylase 5B (KDM5B) from Homo sapiens (Human).